The chain runs to 109 residues: Large ribosomal subunit protein uL24 (109 aa).

A disordered region spans residues 1-24 (MANVTTDIKRNDTVAVTSGKDKGK).

Belongs to the universal ribosomal protein uL24 family. Part of the 50S ribosomal subunit.

Its function is as follows. One of two assembly initiator proteins, it binds directly to the 5'-end of the 23S rRNA, where it nucleates assembly of the 50S subunit. In terms of biological role, one of the proteins that surrounds the polypeptide exit tunnel on the outside of the subunit. In Koribacter versatilis (strain Ellin345), this protein is Large ribosomal subunit protein uL24.